Consider the following 58-residue polypeptide: Large ribosomal subunit protein bL32 (58 aa).

Basic residues predominate over residues 1 to 19 (MAVPKRKTSKSNTKMRRAA). Residues 1-22 (MAVPKRKTSKSNTKMRRAANSK) form a disordered region.

It belongs to the bacterial ribosomal protein bL32 family.

In Clostridioides difficile (strain 630) (Peptoclostridium difficile), this protein is Large ribosomal subunit protein bL32.